A 343-amino-acid polypeptide reads, in one-letter code: Malate dehydrogenase, peroxisomal (343 aa).

NAD(+)-binding positions include 8–14 (GASGGVG) and Asp-34. Residues Arg-80 and Arg-86 each coordinate substrate. Residues Asn-93 and 116-118 (ISN) each bind NAD(+). Asn-118 and Arg-152 together coordinate substrate. His-187 (proton acceptor) is an active-site residue. Met-237 serves as a coordination point for NAD(+).

Belongs to the LDH/MDH superfamily. MDH type 1 family. In terms of assembly, homodimer.

The protein localises to the peroxisome. It catalyses the reaction (S)-malate + NAD(+) = oxaloacetate + NADH + H(+). This Saccharomyces cerevisiae (strain ATCC 204508 / S288c) (Baker's yeast) protein is Malate dehydrogenase, peroxisomal (MDH3).